The primary structure comprises 127 residues: Small ribosomal subunit protein bS6 (127 aa).

The disordered stretch occupies residues 96-127; the sequence is VTTPSPMMKEEKSRSLTPAAGDEGKPAEAAEA. Residues 117–127 show a composition bias toward basic and acidic residues; it reads DEGKPAEAAEA.

The protein belongs to the bacterial ribosomal protein bS6 family.

Binds together with bS18 to 16S ribosomal RNA. This Azoarcus sp. (strain BH72) protein is Small ribosomal subunit protein bS6.